An 824-amino-acid polypeptide reads, in one-letter code: Silver exporting P-type ATPase (824 aa).

Residues 89-112 are disordered; sequence ASEHHHHHDHHEVSPDKIKQSHRQ. The segment covering 98–112 has biased composition (basic and acidic residues); the sequence is HHEVSPDKIKQSHRQ. The next 6 helical transmembrane spans lie at 167–187, 200–220, 234–254, 268–288, 427–447, and 455–475; these read FWLG…SHLF, TWLQ…PFFA, FTLV…ATVF, LVAI…LGQV, WFVP…SVWG, and GLIA…GLAT. D511 acts as the 4-aspartylphosphate intermediate in catalysis. Transmembrane regions (helical) follow at residues 764-784 and 785-805; these read IRQN…VAAG and LLYP…AMAL.

It belongs to the cation transport ATPase (P-type) (TC 3.A.3) family. Type IB subfamily.

It localises to the cell membrane. The enzyme catalyses Ag(+)(in) + ATP + H2O = Ag(+)(out) + ADP + phosphate + H(+). Component of the sil cation-efflux system that confers resistance to silver. The protein is Silver exporting P-type ATPase (silP) of Salmonella typhimurium.